The primary structure comprises 130 residues: Small ribosomal subunit protein uS8 (130 aa).

It belongs to the universal ribosomal protein uS8 family. As to quaternary structure, part of the 30S ribosomal subunit. Contacts proteins S5 and S12.

In terms of biological role, one of the primary rRNA binding proteins, it binds directly to 16S rRNA central domain where it helps coordinate assembly of the platform of the 30S subunit. In Aliivibrio salmonicida (strain LFI1238) (Vibrio salmonicida (strain LFI1238)), this protein is Small ribosomal subunit protein uS8.